Here is a 4306-residue protein sequence, read N- to C-terminus: Cytoplasmic dynein 2 heavy chain 1 (4306 aa).

The stem stretch occupies residues 1-1650 (MAGSLGDVRK…YVQMVDSELQ (1650 aa)). 145–152 (LGIVLRKS) is a binding site for ATP. Residues 669–696 (KELEGYIQKLQNAAERLATENRRLRKWH) are a coiled coil. AAA regions lie at residues 1651 to 1875 (YTYE…VLRG), 1941 to 2161 (SALK…KQND), 2249 to 2505 (LTAD…WVLG), and 2617 to 2862 (HYGR…ESCK). Residues 1689–1696 (GPAGTGKT), 1979–1986 (GPSGAGKS), 2291–2298 (GPEGCGKG), and 2655–2662 (GRSGVGRR) each bind ATP. The interval 2880–3168 (AISSSKKKEL…AEVSKAQETI (289 aa)) is stalk. Coiled coils occupy residues 2896 to 2981 (LQAG…KEVQ), 3108 to 3199 (LETE…LATL), and 3407 to 3441 (IQHE…SLLE). 2 AAA regions span residues 3243-3472 (LCTE…LIQD) and 3689-3904 (MALF…VIDR).

This sequence belongs to the dynein heavy chain family. The cytoplasmic dynein complex 2 is probably composed by a heavy chain DYNC2H1 homodimer and a number of DYNC2LI1 light intermediate chains. As to expression, detected in brain, lung, spleen and kidney (at protein level). Enriched in the ependymal layer lining the lateral ventricles (at protein level).

Its subcellular location is the cytoplasm. The protein resides in the cytoskeleton. The protein localises to the cilium axoneme. It localises to the cell membrane. Its function is as follows. May function as a motor for intraflagellar retrograde transport. Functions in cilia biogenesis. According to PubMed:8666668, it may play a role in transport between endoplasmic reticulum and Golgi or organization of the Golgi in cells. This Mus musculus (Mouse) protein is Cytoplasmic dynein 2 heavy chain 1 (Dync2h1).